Reading from the N-terminus, the 239-residue chain is Ribonuclease HII (239 aa).

The region spanning 30–221 is the RNase H type-2 domain; that stretch reads GPVAGVDEVG…VRRVANGSGG (192 aa). A divalent metal cation is bound by residues aspartate 36, glutamate 37, and aspartate 130.

Belongs to the RNase HII family. Mn(2+) is required as a cofactor. Mg(2+) serves as cofactor.

The protein resides in the cytoplasm. It catalyses the reaction Endonucleolytic cleavage to 5'-phosphomonoester.. Endonuclease that specifically degrades the RNA of RNA-DNA hybrids. This Mycolicibacterium paratuberculosis (strain ATCC BAA-968 / K-10) (Mycobacterium paratuberculosis) protein is Ribonuclease HII.